The chain runs to 386 residues: Leupaxin (386 aa).

Methionine 1 carries the N-acetylmethionine modification. The short motif at 3–15 (ELDALLEELERST) is the LD motif 1 element. The interval 13–41 (RSTLQDSDEYSNPAPLPLDQHSRKETNLD) is disordered. Serine 19 bears the Phosphoserine mark. Phosphotyrosine is present on tyrosine 22. Serine 54 is modified (phosphoserine). Tyrosine 62 bears the Phosphotyrosine mark. Short sequence motifs (LD motif) lie at residues 70 to 82 (NVYS…KESP) and 92 to 103 (QLDELMAHLTEM). The residue at position 72 (tyrosine 72) is a Phosphotyrosine; by LYN. Phosphoserine is present on serine 81. LIM zinc-binding domains are found at residues 150–208 (GHCA…QLFS), 209–267 (PRCA…AMFS), 268–326 (PKCG…HRRG), and 327–386 (TLCH…LFPL).

Belongs to the paxillin family. In terms of assembly, interacts with PTPN22. Interacts with unphosphorylated ITGA4. Interacts with PTK2B/PYK2, PTPN12, AR and SRF. Interacts (via LD motif 3) with LYN and the interaction is induced upon B-cell antigen receptor (BCR) activation. Interacts (via LD motif 3) with PTK2/FAK. In terms of processing, phosphorylated on tyrosine residues. Phosphorylation on Tyr-72 is important for its inhibitory function. Bombesin stimulates phosphorylation on Tyr-22, Tyr-62 and Tyr-72. In terms of tissue distribution, macrophages, monocytes and osteoclasts (at protein level). Strongly expressed in cells and tissues of hematopoietic origin. Highest expression in lymphoid tissues such as spleen, lymph node, thymus and appendix and in the vascular smooth muscle. Lower levels in bone marrow and fetal liver. Also expressed in peripheral blood lymphocytes and a number of hematopoietic cell lines. Very low levels found in epithelial cell lines. Expressed in prostate cancer (PCa) cells and its expression intensity is directly linked to PCa progression.

The protein resides in the cytoplasm. Its subcellular location is the cell junction. The protein localises to the focal adhesion. It localises to the nucleus. It is found in the perinuclear region. The protein resides in the cell projection. Its subcellular location is the podosome. The protein localises to the cell membrane. In terms of biological role, transcriptional coactivator for androgen receptor (AR) and serum response factor (SRF). Contributes to the regulation of cell adhesion, spreading and cell migration and acts as a negative regulator in integrin-mediated cell adhesion events. Suppresses the integrin-induced tyrosine phosphorylation of paxillin (PXN). May play a critical role as an adapter protein in the formation of the adhesion zone in osteoclasts. Negatively regulates B-cell antigen receptor (BCR) signaling. The chain is Leupaxin (LPXN) from Homo sapiens (Human).